A 24-amino-acid chain; its full sequence is Lantibiotic 107891 (24 aa).

Thr2 is modified ((E)-2,3-didehydrobutyrine). Residues 3-7 (SWSLC) constitute a cross-link (lanthionine (Ser-Cys)). Trp4 carries the post-translational modification 6'-chlorotryptophan. Ser5 carries the post-translational modification 2,3-didehydroalanine (Ser). A cross-link (beta-methyllanthionine (Thr-Cys)) is located at residues 8 to 11 (TPGC). 2 consecutive cross-links (lanthionine (Ser-Cys)) follow at residues 13 to 20 (SPGGGSNC) and 18 to 23 (SNCSFC). The residue at position 14 (Pro14) is a 3,4-dihydroxyproline; in form A1. 4-hydroxyproline; in form A2 is present on Pro14. A cross-link (S-(2-aminovinyl)-D-cysteine (Ser-Cys)) is located at residues 21-24 (SFCC).

The protein belongs to the type A lantibiotic family. Maturation of lantibiotics involves the enzymatic conversion of Thr, and Ser into dehydrated AA and the formation of thioether bonds with cysteine. The C-terminal lanthionine undergoes decarboxylation. This is followed by membrane translocation and cleavage of the modified precursor. Post-translationally, occurs in 2 forms, A1 contains 3,4-dihydroxyproline at Pro-14, A2 contains 4-hydroxyproline at Pro-14. The patent report does not provide the stereochemistry of the modified prolines. In terms of processing, the patent report does not describe whether the 2,3-didehydrobutyrine is the E- or Z-isomer. In several diagrams it is shown as the E-isomer.

In terms of biological role, lanthionine-containing peptide antibiotic (lantibiotic) active on Gram-positive bacteria. The bactericidal activity of lantibiotics is based on depolarization of energized bacterial cytoplasmic membranes, initiated by the formation of aqueous transmembrane pores. The protein is Lantibiotic 107891 of Microbispora sp. (strain 107891).